A 121-amino-acid polypeptide reads, in one-letter code: uncharacterized protein (121 aa).

A Cupin type-2 domain is found at 47–101 (SEVPHYHAEHDLTFTVLKGKGELYLEGEKKKLKEGDWAFIPKGAVHFYRNTSELS).

This is an uncharacterized protein from Aquifex aeolicus (strain VF5).